Reading from the N-terminus, the 121-residue chain is UPF0738 protein BLi01253/BL05110 (121 aa).

The protein belongs to the UPF0738 family.

The protein is UPF0738 protein BLi01253/BL05110 of Bacillus licheniformis (strain ATCC 14580 / DSM 13 / JCM 2505 / CCUG 7422 / NBRC 12200 / NCIMB 9375 / NCTC 10341 / NRRL NRS-1264 / Gibson 46).